We begin with the raw amino-acid sequence, 313 residues long: Myeloma-overexpressed gene protein (313 aa).

Residues 107-129 (ERNKGDKGAQTGAGLSQEAEDVD) are disordered.

In Homo sapiens (Human), this protein is Myeloma-overexpressed gene protein (MYEOV).